The following is an 87-amino-acid chain: Glutaredoxin (87 aa).

In terms of domain architecture, Glutaredoxin spans 1–87 (MFVVIFGRPG…LMKEQFGIVA (87 aa)). Cysteines 11 and 14 form a disulfide.

The protein belongs to the glutaredoxin family. In terms of assembly, monomer.

It localises to the cytoplasm. Functionally, has a glutathione-disulfide oxidoreductase activity in the presence of NADPH and glutathione reductase. Reduces low molecular weight disulfides and proteins. The protein is Glutaredoxin (grxA) of Haemophilus influenzae (strain ATCC 51907 / DSM 11121 / KW20 / Rd).